Reading from the N-terminus, the 313-residue chain is Carbamate kinase 2 (313 aa).

The protein belongs to the carbamate kinase family.

It is found in the cytoplasm. It catalyses the reaction hydrogencarbonate + NH4(+) + ATP = carbamoyl phosphate + ADP + H2O + H(+). Its pathway is metabolic intermediate metabolism; carbamoyl phosphate degradation; CO(2) and NH(3) from carbamoyl phosphate: step 1/1. The protein is Carbamate kinase 2 (arcC2) of Staphylococcus aureus (strain MRSA252).